The chain runs to 931 residues: ORF4 polyprotein (931 aa).

Post-translationally, proteolytic processing of ORF4 polyprotein yields the VP4a, VP4b and VP4c capsid proteins.

It localises to the virion. Its function is as follows. ORF4 polyprotein codes for VP4a, VP4b, and VP4c, three of the four proteins that self-assemble to form the icosahedral capsid. The capsid is made of VP3 (coded by ORF3), VP4a, VP4b and VP4c. In Drosophila melanogaster (Fruit fly), this protein is ORF4 polyprotein.